Reading from the N-terminus, the 363-residue chain is Cellular tumor antigen p53 (363 aa).

Positions 1 to 29 (MEPSSETGMDPPLSQETFEDLWSLLPDPL) are transcription activation (acidic). A DNA-binding region spans residues 76–267 (DYAGKYGLQL…RTEEDNYTKK (192 aa)). 4 residues coordinate Zn(2+): cysteine 150, histidine 153, cysteine 213, and cysteine 217. The interval 248–255 (RVCACPGR) is interaction with DNA. The tract at residues 257-290 (RRTEEDNYTKKRGLKPSGKRELAHPPSSEPPLPK) is disordered. Positions 275 to 292 (KRELAHPPSSEPPLPKKR) match the Bipartite nuclear localization signal motif. Residues 300-331 (EEIFTLRIKGRSRYEMIKKLNDALELQESLDQ) form an oligomerization region. Residues 314–325 (EMIKKLNDALEL) carry the Nuclear export signal motif. The tract at residues 344-356 (EIKPKKGKKLLVK) is basic (repression of DNA-binding).

The protein belongs to the p53 family. Binds DNA as a homotetramer. Requires Zn(2+) as cofactor. Ubiquitous.

It is found in the cytoplasm. It localises to the nucleus. Its function is as follows. Multifunctional transcription factor that induces cell cycle arrest, DNA repair or apoptosis upon binding to its target DNA sequence. Acts as a tumor suppressor in many tumor types; induces growth arrest or apoptosis depending on the physiological circumstances and cell type. Negatively regulates cell division by controlling expression of a set of genes required for this process. One of the activated genes is an inhibitor of cyclin-dependent kinases. Apoptosis induction seems to be mediated either by stimulation of BAX and FAS antigen expression, or by repression of Bcl-2 expression. This is Cellular tumor antigen p53 (tp53) from Xenopus laevis (African clawed frog).